Reading from the N-terminus, the 484-residue chain is Rho guanine nucleotide exchange factor 35 (484 aa).

Positions 139-418 (FSSDLGSEEE…ALIAPEDSPH (280 aa)) are disordered. Ser184 bears the Phosphoserine mark. Positions 217-237 (ESQGLLHPQEVQVLEEQGQQE) are enriched in low complexity. Residues 266–278 (NDEKGEQKQKQEQ) are compositionally biased toward basic and acidic residues. Over residues 299-309 (GLNDGEWEQED) the composition is skewed to acidic residues. Composition is skewed to basic and acidic residues over residues 323 to 368 (GEER…KEKG) and 394 to 404 (RSREEENEHHG).

The chain is Rho guanine nucleotide exchange factor 35 (ARHGEF35) from Homo sapiens (Human).